The primary structure comprises 277 residues: Undecaprenyl-diphosphatase (277 aa).

Helical transmembrane passes span 88 to 108 (MGWLVILGSLPIIVLGLLFQD), 117 to 137 (MWIVATMLIVFGMILAVADAV), 157 to 179 (FAQAMALIPGVSRSGGTITAGLL), 191 to 211 (SFLLAIPAVFGSGLYQLYKTV), 227 to 247 (LATVIAFVVGYVIIGWFLKFV), and 255 to 275 (FVWYRILLGLALYVLLGFNVI).

Belongs to the UppP family.

The protein resides in the cell membrane. It catalyses the reaction di-trans,octa-cis-undecaprenyl diphosphate + H2O = di-trans,octa-cis-undecaprenyl phosphate + phosphate + H(+). In terms of biological role, catalyzes the dephosphorylation of undecaprenyl diphosphate (UPP). Confers resistance to bacitracin. The protein is Undecaprenyl-diphosphatase of Paenarthrobacter aurescens (strain TC1).